A 75-amino-acid chain; its full sequence is uncharacterized protein (75 aa).

A helical transmembrane segment spans residues 12-32 (LKVFILFTGFTALFYYAMIWV).

The protein localises to the cell membrane. This is an uncharacterized protein from Bacillus subtilis (strain 168).